The sequence spans 385 residues: Pepsin A (385 aa).

Residues methionine 1 to cysteine 15 form the signal peptide. Residues leucine 16 to leucine 59 constitute a propeptide, activation peptide. Residues tyrosine 73–alanine 382 form the Peptidase A1 domain. Residue aspartate 91 is part of the active site. Residues cysteine 104 and cysteine 109 are joined by a disulfide bond. Serine 127 carries the phosphoserine modification. A disulfide bridge connects residues cysteine 265 and cysteine 269. Aspartate 274 is a catalytic residue. Cysteines 308 and 341 form a disulfide.

The protein belongs to the peptidase A1 family. Post-translationally, minor amounts of the active enzyme occur with 'Ala-58' at the amino end.

It localises to the secreted. It catalyses the reaction Preferential cleavage: hydrophobic, preferably aromatic, residues in P1 and P1' positions. Cleaves 1-Phe-|-Val-2, 4-Gln-|-His-5, 13-Glu-|-Ala-14, 14-Ala-|-Leu-15, 15-Leu-|-Tyr-16, 16-Tyr-|-Leu-17, 23-Gly-|-Phe-24, 24-Phe-|-Phe-25 and 25-Phe-|-Tyr-26 bonds in the B chain of insulin.. Its function is as follows. Shows particularly broad specificity; although bonds involving phenylalanine and leucine are preferred, many others are also cleaved to some extent. This Sus scrofa (Pig) protein is Pepsin A (PGA).